The primary structure comprises 330 residues: 4,5-dihydroxyphthalate decarboxylase (330 aa).

The protein to P.putida DHP decarboxylase.

The enzyme catalyses 4,5-dihydroxyphthalate + H(+) = 3,4-dihydroxybenzoate + CO2. The protein operates within xenobiotic degradation; phthalate degradation; 3,4-dihydroxybenzoate from phthalate: step 3/3. This Comamonas testosteroni (Pseudomonas testosteroni) protein is 4,5-dihydroxyphthalate decarboxylase (phtD).